A 256-amino-acid polypeptide reads, in one-letter code: Short chain dehydrogenase adrF (256 aa).

Positions 11, 57, 119, 151, 155, and 184 each coordinate NADP(+). The Proton acceptor role is filled by Tyr151. Lys155 serves as the catalytic Lowers pKa of active site Tyr.

The protein belongs to the short-chain dehydrogenases/reductases (SDR) family.

It participates in secondary metabolite biosynthesis; terpenoid biosynthesis. Short chain dehydrogenase; part of the gene cluster that mediates the biosynthesis of andrastins, meroterpenoid compounds that exhibit inhibitory activity against ras farnesyltransferase, suggesting that they could be promising leads for antitumor agents. The first step of the pathway is the synthesis of 3,5-dimethylorsellinic acid (DMOA) by the polyketide synthase adrD via condensation of one acetyl-CoA starter unit with 3 malonyl-CoA units and 2 methylations. DMAO is then converted to farnesyl-DMAO by the prenyltransferase adrG. The methyltransferase adrK catalyzes the methylation of the carboxyl group of farnesyl-DMAO to farnesyl-DMAO methyl ester which is further converted to epoxyfarnesyl-DMAO methyl ester by the FAD-dependent monooxygenase adrH. The terpene cyclase adrI then catalyzes the carbon skeletal rearrangement to generate the andrastin E, the first compound in the pathway having the andrastin scaffold, with the tetracyclic ring system. The post-cyclization tailoring enzymes adrF, adrE, adrJ, and adrA, are involved in the conversion of andrastin E into andrastin A. The short chain dehydrogenase adrF is responsible for the oxidation of the C-3 a hydroxyl group of andrastin E to yield the corresponding ketone, andrastin D. The ketoreductase adrE stereoselectively reduces the carbonyl moiety to reverse the stereochemistry of the C-3 position to yield andrastin F. The acetyltransferase adrJ is the acetyltransferase that attaches the acetyl group to the C-3 hydroxyl group of andrastin F to yield andrastin C. Finally, the cytochrome P450 monooxygenase adrA catalyzes two sequential oxidation reactions of the C-23 methyl group, to generate the corresponding alcohol andrastin B, and aldehyde andrastin A. The chain is Short chain dehydrogenase adrF from Penicillium roqueforti.